A 317-amino-acid polypeptide reads, in one-letter code: Cytochrome f (317 aa).

The first 34 residues, 1-34 (MKGLKNQIMKKTSLFICTLLFILSIVFYPKITFA), serve as a signal peptide directing secretion. Heme is bound by residues Tyr35, Cys55, Cys58, and His59. A helical transmembrane segment spans residues 284-304 (VIGLIAFFIGVGLTQILLVLK).

This sequence belongs to the cytochrome f family. In terms of assembly, the 4 large subunits of the cytochrome b6-f complex are cytochrome b6, subunit IV (17 kDa polypeptide, PetD), cytochrome f and the Rieske protein, while the 4 small subunits are PetG, PetL, PetM and PetN. The complex functions as a dimer. Requires heme as cofactor.

The protein localises to the cellular thylakoid membrane. Its function is as follows. Component of the cytochrome b6-f complex, which mediates electron transfer between photosystem II (PSII) and photosystem I (PSI), cyclic electron flow around PSI, and state transitions. The chain is Cytochrome f from Prochlorococcus marinus (strain MIT 9215).